The sequence spans 84 residues: Cytochrome b559 subunit alpha (84 aa).

Residues 2 to 20 (AGTTGERPFSDIITSVRYW) are Cytoplasmic-facing. A helical transmembrane segment spans residues 21–35 (VIHSITIPALFIAGW). His23 is a heme binding site. Topologically, residues 36–84 (LFVSTGLAYDVFGTPRPDSYYAQEQRSIPLVTDRFEAKQQVETFLEQLK) are lumenal.

Belongs to the PsbE/PsbF family. As to quaternary structure, heterodimer of an alpha subunit and a beta subunit. PSII is composed of 1 copy each of membrane proteins PsbA, PsbB, PsbC, PsbD, PsbE, PsbF, PsbH, PsbI, PsbJ, PsbK, PsbL, PsbM, PsbT, PsbX, PsbY, PsbZ, Psb30/Ycf12, peripheral proteins PsbO, CyanoQ (PsbQ), PsbU, PsbV and a large number of cofactors. It forms dimeric complexes. Heme b is required as a cofactor.

The protein resides in the cellular thylakoid membrane. This b-type cytochrome is tightly associated with the reaction center of photosystem II (PSII). PSII is a light-driven water:plastoquinone oxidoreductase that uses light energy to abstract electrons from H(2)O, generating O(2) and a proton gradient subsequently used for ATP formation. It consists of a core antenna complex that captures photons, and an electron transfer chain that converts photonic excitation into a charge separation. This is Cytochrome b559 subunit alpha from Thermostichus vulcanus (Synechococcus vulcanus).